An 84-amino-acid chain; its full sequence is Small ribosomal subunit protein uS15 (84 aa).

It belongs to the universal ribosomal protein uS15 family. As to quaternary structure, part of the 30S ribosomal subunit. Forms a bridge to the 50S subunit in the 70S ribosome, contacting the 23S rRNA.

In terms of biological role, one of the primary rRNA binding proteins, it binds directly to 16S rRNA where it helps nucleate assembly of the platform of the 30S subunit by binding and bridging several RNA helices of the 16S rRNA. Forms an intersubunit bridge (bridge B4) with the 23S rRNA of the 50S subunit in the ribosome. The chain is Small ribosomal subunit protein uS15 from Thermosipho melanesiensis (strain DSM 12029 / CIP 104789 / BI429).